The chain runs to 372 residues: Lipid-A-disaccharide synthase (372 aa).

This sequence belongs to the LpxB family.

The enzyme catalyses a lipid X + a UDP-2-N,3-O-bis[(3R)-3-hydroxyacyl]-alpha-D-glucosamine = a lipid A disaccharide + UDP + H(+). It functions in the pathway bacterial outer membrane biogenesis; LPS lipid A biosynthesis. In terms of biological role, condensation of UDP-2,3-diacylglucosamine and 2,3-diacylglucosamine-1-phosphate to form lipid A disaccharide, a precursor of lipid A, a phosphorylated glycolipid that anchors the lipopolysaccharide to the outer membrane of the cell. The chain is Lipid-A-disaccharide synthase from Thiobacillus denitrificans (strain ATCC 25259 / T1).